A 201-amino-acid polypeptide reads, in one-letter code: FMN-dependent NADH:quinone oxidoreductase (201 aa).

Residues Ser-9, 16-18 (SVS), and 93-96 (MYNF) contribute to the FMN site.

This sequence belongs to the azoreductase type 1 family. As to quaternary structure, homodimer. The cofactor is FMN.

The enzyme catalyses 2 a quinone + NADH + H(+) = 2 a 1,4-benzosemiquinone + NAD(+). The catalysed reaction is N,N-dimethyl-1,4-phenylenediamine + anthranilate + 2 NAD(+) = 2-(4-dimethylaminophenyl)diazenylbenzoate + 2 NADH + 2 H(+). Its function is as follows. Quinone reductase that provides resistance to thiol-specific stress caused by electrophilic quinones. In terms of biological role, also exhibits azoreductase activity. Catalyzes the reductive cleavage of the azo bond in aromatic azo compounds to the corresponding amines. The sequence is that of FMN-dependent NADH:quinone oxidoreductase from Gluconacetobacter diazotrophicus (strain ATCC 49037 / DSM 5601 / CCUG 37298 / CIP 103539 / LMG 7603 / PAl5).